The sequence spans 773 residues: 4'-phosphopantetheine phosphatase (773 aa).

Ala2 is subject to N-acetylalanine. The tract at residues 2–402 (AECRASGGGS…APELCPTQRA (401 aa)) is pantothenate kinase. Acetyl-CoA-binding residues include Ser196 and Ser199. Tyr320 carries the post-translational modification 3'-nitrotyrosine. The interval 403 to 773 (RSGTFDLLEM…VIFKYEVPAE (371 aa)) is 4'-phosphopantetheine phosphatase. A Phosphoserine modification is found at Ser404. Thr406 is modified (phosphothreonine). Residues Asp623, Asn624, and Asp659 each contribute to the Mn(2+) site. The Subfamily II EGMGR motif signature appears at 724–728 (EGMGR).

It in the N-terminal section; belongs to the type II pantothenate kinase family. The protein in the C-terminal section; belongs to the damage-control phosphatase family. Phosphopantetheine phosphatase (II) subfamily. Homodimer. Interacts with PKM. Requires Mn(2+) as cofactor. Ni(2+) is required as a cofactor.

It is found in the cytoplasm. It carries out the reaction (R)-4'-phosphopantetheine + H2O = (R)-pantetheine + phosphate. The enzyme catalyses (R)-4'-phosphopantetheine sulfonate + H2O = (R)-pantetheine sulfonate + phosphate. The catalysed reaction is (R)-4'-phospho-S-sulfopantetheine + H2O = (R)-S-sulfopantetheine + phosphate. With respect to regulation, activity is strongly promoted by Co(2+), Ni(2+), Mg(2+) and Mn(2+). Activity is inhibited by EDTA. In terms of biological role, phosphatase which shows a preference for 4'-phosphopantetheine and its oxidatively damaged forms (sulfonate or S-sulfonate), providing strong indirect evidence that the phosphatase activity pre-empts damage in the coenzyme A (CoA) pathway. Hydrolyzing excess 4'-phosphopantetheine could constitute a directed overflow mechanism to prevent its oxidation to the S-sulfonate, sulfonate, or other forms. Hydrolyzing 4'-phosphopantetheine sulfonate or S-sulfonate would forestall their conversion to inactive forms of CoA and acyl carrier protein. May play a role in the physiological regulation of CoA intracellular levels. The protein is 4'-phosphopantetheine phosphatase of Rattus norvegicus (Rat).